Consider the following 166-residue polypeptide: Phospholipase A2 myotoxin inhibitor protein (166 aa).

The N-terminal stretch at 1-19 (MRLILLSGLLLLGTFLANG) is a signal peptide. One can recognise a C-type lectin domain in the interval 46-161 (LKYAFLTVHK…CDDNLLVVCE (116 aa)). Disulfide bonds link C83/C160 and C138/C152. Residue N122 is glycosylated (N-linked (GlcNAc...) asparagine).

It belongs to the alpha-type phospholipase A2 inhibitor family. In terms of assembly, oligomer. Homotrimer; non-covalently linked. Post-translationally, glycosylated. The glycosylation has no role in the association of this PLI and PA2 enzyme. Expressed by the liver.

The protein localises to the secreted. In terms of biological role, this phospholipase A2 inhibitor binds directly phospholipase A2 in the presence or absence of calcium. Has anti-enzymatic, anti-myotoxic, anti-edema inducing, anti-cytotoxic, anti-bactericidal, and anti-lethal properties against basic and acidic phospholipases A2 from Bothrops venoms. The chain is Phospholipase A2 myotoxin inhibitor protein from Bothrops moojeni (Lance-headed viper).